The following is a 520-amino-acid chain: Chaperone Ric-8B (520 aa).

A Phosphoserine modification is found at S468. T473 is subject to Phosphothreonine.

The protein belongs to the synembryn family. In terms of assembly, interacts with GDP-bound G(s) G-alpha proteins GNAL and GNAS. Does not interact with G-alpha proteins when they are in complex with subunits beta and gamma. Predominantly expressed in the mature olfactory sensory neurons and also in a few regions in the brain.

The protein resides in the cytoplasm. It is found in the cell cortex. Its function is as follows. Chaperone that specifically binds and folds nascent G(s) G-alpha proteins (GNAS and GNAL) prior to G protein heterotrimer formation, promoting their association with the plasma membrane. Also acts as a guanine nucleotide exchange factor (GEF) for G(s) proteins by stimulating exchange of bound GDP for free GTP. Acts as an important component for odorant signal transduction by mediating GNAL (G(olf)-alpha) folding, thereby promoting-dependent cAMP accumulation in olfactory sensory neurons. In Mus musculus (Mouse), this protein is Chaperone Ric-8B.